Here is a 309-residue protein sequence, read N- to C-terminus: Protoheme IX farnesyltransferase (309 aa).

9 consecutive transmembrane segments (helical) span residues 35–55 (IGIV…ALYF), 64–84 (LHIV…SCSI), 114–134 (VLWL…MTTV), 135–155 (TAAI…TMWS), 161–181 (LNTV…WTAV), 187–207 (VVPL…FLAL), 236–256 (IVVW…LGVP), 257–277 (FLTV…YGFK), and 289–309 (FIYS…ATLW).

The protein belongs to the UbiA prenyltransferase family. Protoheme IX farnesyltransferase subfamily. As to quaternary structure, interacts with CtaA.

The protein localises to the cell membrane. The enzyme catalyses heme b + (2E,6E)-farnesyl diphosphate + H2O = Fe(II)-heme o + diphosphate. It functions in the pathway porphyrin-containing compound metabolism; heme O biosynthesis; heme O from protoheme: step 1/1. Its function is as follows. Converts heme B (protoheme IX) to heme O by substitution of the vinyl group on carbon 2 of heme B porphyrin ring with a hydroxyethyl farnesyl side group. The chain is Protoheme IX farnesyltransferase from Geobacillus sp. (strain WCH70).